Here is a 968-residue protein sequence, read N- to C-terminus: Alanine--tRNA ligase, cytoplasmic (968 aa).

An N-acetylmethionine modification is found at Met1. Ser3 carries the post-translational modification Phosphoserine. At Lys19 the chain carries N6-acetyllysine. ATP-binding positions include Arg77, His95, Trp176, and 214 to 216 (IWN). L-alanine-binding residues include Asn216 and Asp239. An ATP-binding site is contributed by Gly243. Phosphoserine occurs at positions 399 and 555. 4 residues coordinate Zn(2+): His605, His609, Cys723, and His727. Residues 750–763 (RRIVAVTGAEAQKA) carry the Nuclear localization signal motif. Lys876 bears the N6-acetyllysine mark. Lys943 is subject to N6,N6,N6-trimethyllysine; alternate. An N6,N6-dimethyllysine; alternate modification is found at Lys943. At Lys943 the chain carries N6-methyllysine; alternate.

The protein belongs to the class-II aminoacyl-tRNA synthetase family. In terms of assembly, monomer. Interacts with ANKRD16; the interaction is direct. Requires Zn(2+) as cofactor. In terms of processing, ISGylated. Post-translationally, methylation at 'Lys-943' by METTL21C.

The protein localises to the cytoplasm. Its subcellular location is the nucleus. The enzyme catalyses tRNA(Ala) + L-alanine + ATP = L-alanyl-tRNA(Ala) + AMP + diphosphate. The catalysed reaction is (S)-lactate + ATP + H(+) = (S)-lactoyl-AMP + diphosphate. It carries out the reaction (S)-lactoyl-AMP + L-lysyl-[protein] = N(6)-[(S)-lactoyl]-L-lysyl-[protein] + AMP + 2 H(+). The protein lactyltransferase activity is inhibited by beta-alanine. In terms of biological role, catalyzes the attachment of alanine to tRNA(Ala) in a two-step reaction: alanine is first activated by ATP to form Ala-AMP and then transferred to the acceptor end of tRNA(Ala). Also edits incorrectly charged tRNA(Ala) via its editing domain. In presence of high levels of lactate, also acts as a protein lactyltransferase that mediates lactylation of lysine residues in target proteins, such as TEAD1, TP53/p53 and YAP1. Protein lactylation takes place in a two-step reaction: lactate is first activated by ATP to form lactate-AMP and then transferred to lysine residues of target proteins. Acts as an inhibitor of TP53/p53 activity by catalyzing lactylation of TP53/p53. Acts as a positive regulator of the Hippo pathway by mediating lactylation of TEAD1 and YAP1. The polypeptide is Alanine--tRNA ligase, cytoplasmic (Aars1) (Rattus norvegicus (Rat)).